A 310-amino-acid chain; its full sequence is Glutaminase 1 (310 aa).

Residues Ser66, Asn117, Glu161, Asn168, Tyr192, Tyr244, and Val262 each contribute to the substrate site. Residue Lys294 is modified to N6-acetyllysine.

Belongs to the glutaminase family. In terms of assembly, homotetramer.

The enzyme catalyses L-glutamine + H2O = L-glutamate + NH4(+). The chain is Glutaminase 1 from Escherichia coli O6:H1 (strain CFT073 / ATCC 700928 / UPEC).